An 83-amino-acid polypeptide reads, in one-letter code: Cytochrome b559 subunit alpha (83 aa).

A helical membrane pass occupies residues 21 to 35 (VIHSITIPSLFIAGW). His23 serves as a coordination point for heme.

Belongs to the PsbE/PsbF family. In terms of assembly, heterodimer of an alpha subunit and a beta subunit. PSII is composed of 1 copy each of membrane proteins PsbA, PsbB, PsbC, PsbD, PsbE, PsbF, PsbH, PsbI, PsbJ, PsbK, PsbL, PsbM, PsbT, PsbX, PsbY, PsbZ, Psb30/Ycf12, at least 3 peripheral proteins of the oxygen-evolving complex and a large number of cofactors. It forms dimeric complexes. Requires heme b as cofactor.

It is found in the plastid. Its subcellular location is the chloroplast thylakoid membrane. Functionally, this b-type cytochrome is tightly associated with the reaction center of photosystem II (PSII). PSII is a light-driven water:plastoquinone oxidoreductase that uses light energy to abstract electrons from H(2)O, generating O(2) and a proton gradient subsequently used for ATP formation. It consists of a core antenna complex that captures photons, and an electron transfer chain that converts photonic excitation into a charge separation. The polypeptide is Cytochrome b559 subunit alpha (Phalaenopsis aphrodite subsp. formosana (Moth orchid)).